Here is a 627-residue protein sequence, read N- to C-terminus: tRNA uridine 5-carboxymethylaminomethyl modification enzyme MnmG (627 aa).

Residue 14 to 19 (GAGHAG) coordinates FAD. 275–289 (GPRYCPSIEDKVVKF) lines the NAD(+) pocket.

The protein belongs to the MnmG family. Homodimer. Heterotetramer of two MnmE and two MnmG subunits. FAD serves as cofactor.

Its subcellular location is the cytoplasm. Its function is as follows. NAD-binding protein involved in the addition of a carboxymethylaminomethyl (cmnm) group at the wobble position (U34) of certain tRNAs, forming tRNA-cmnm(5)s(2)U34. This Lachnoclostridium phytofermentans (strain ATCC 700394 / DSM 18823 / ISDg) (Clostridium phytofermentans) protein is tRNA uridine 5-carboxymethylaminomethyl modification enzyme MnmG.